Consider the following 452-residue polypeptide: Glucose-6-phosphate isomerase (452 aa).

Glutamate 290 acts as the Proton donor in catalysis. Active-site residues include histidine 311 and lysine 425.

This sequence belongs to the GPI family.

It is found in the cytoplasm. The enzyme catalyses alpha-D-glucose 6-phosphate = beta-D-fructose 6-phosphate. It participates in carbohydrate biosynthesis; gluconeogenesis. Its pathway is carbohydrate degradation; glycolysis; D-glyceraldehyde 3-phosphate and glycerone phosphate from D-glucose: step 2/4. In terms of biological role, catalyzes the reversible isomerization of glucose-6-phosphate to fructose-6-phosphate. This Limosilactobacillus reuteri (strain DSM 20016) (Lactobacillus reuteri) protein is Glucose-6-phosphate isomerase.